The sequence spans 433 residues: Trigger factor (433 aa).

In terms of domain architecture, PPIase FKBP-type spans 161-246 (EDRVVIDFVG…LKKVENIVLP (86 aa)).

This sequence belongs to the FKBP-type PPIase family. Tig subfamily.

The protein resides in the cytoplasm. It carries out the reaction [protein]-peptidylproline (omega=180) = [protein]-peptidylproline (omega=0). Its function is as follows. Involved in protein export. Acts as a chaperone by maintaining the newly synthesized protein in an open conformation. Functions as a peptidyl-prolyl cis-trans isomerase. In Actinobacillus pleuropneumoniae serotype 7 (strain AP76), this protein is Trigger factor.